The sequence spans 353 residues: Tectonin-2 (353 aa).

The Ricin B-type lectin domain occupies 44–93; sequence WIFDNDGYIRLAANHNLVLDVNGGAAKEGNTVLSYPDKKDHAKNQLWVNK. A run of 6 repeats spans residues 138–173, 174–210, 211–247, 248–282, 283–318, and 319–353. The segment at 138 to 353 is 6 X approximate tandem repeats; the sequence is SAWERHEGEL…SAHNIYKALL (216 aa).

The protein belongs to the tectonin family.

The protein resides in the cell surface. It is found in the cytoplasmic vesicle membrane. Probably involved in bacterial recognition. May be a lectin that function as part of a transmembrane signaling complex during phagocytosis. The polypeptide is Tectonin-2 (TECB) (Physarum polycephalum (Slime mold)).